Reading from the N-terminus, the 473-residue chain is Photosystem II CP43 reaction center protein (473 aa).

Positions 1–14 (MKILYSLRRFYHVE) are excised as a propeptide. The residue at position 15 (threonine 15) is an N-acetylthreonine. Threonine 15 is modified (phosphothreonine). Transmembrane regions (helical) follow at residues 69 to 93 (LFEV…PHLA), 134 to 155 (LLGP…KDRN), 178 to 200 (KALY…RKIT), 255 to 275 (KPFA…LSYS), and 291 to 312 (WFNN…ASQA). Residue glutamate 367 participates in [CaMn4O5] cluster binding. A helical membrane pass occupies residues 447–471 (RARAAAAGFEKGIDRDLEPVLYMNP).

It belongs to the PsbB/PsbC family. PsbC subfamily. In terms of assembly, PSII is composed of 1 copy each of membrane proteins PsbA, PsbB, PsbC, PsbD, PsbE, PsbF, PsbH, PsbI, PsbJ, PsbK, PsbL, PsbM, PsbT, PsbX, PsbY, PsbZ, Psb30/Ycf12, at least 3 peripheral proteins of the oxygen-evolving complex and a large number of cofactors. It forms dimeric complexes. Requires Binds multiple chlorophylls and provides some of the ligands for the Ca-4Mn-5O cluster of the oxygen-evolving complex. It may also provide a ligand for a Cl- that is required for oxygen evolution. PSII binds additional chlorophylls, carotenoids and specific lipids. as cofactor.

The protein resides in the plastid. Its subcellular location is the chloroplast thylakoid membrane. One of the components of the core complex of photosystem II (PSII). It binds chlorophyll and helps catalyze the primary light-induced photochemical processes of PSII. PSII is a light-driven water:plastoquinone oxidoreductase, using light energy to abstract electrons from H(2)O, generating O(2) and a proton gradient subsequently used for ATP formation. The sequence is that of Photosystem II CP43 reaction center protein from Brachypodium distachyon (Purple false brome).